We begin with the raw amino-acid sequence, 123 residues long: uncharacterized protein (123 aa).

In terms of domain architecture, Rhodanese spans 17–117 (LNNNAFLVDV…NNQDKGWKQN (101 aa)).

This is an uncharacterized protein from Rickettsia prowazekii (strain Madrid E).